A 220-amino-acid chain; its full sequence is Cytidylate kinase (220 aa).

An ATP-binding site is contributed by 9–17 (GPAASGKST).

This sequence belongs to the cytidylate kinase family. Type 1 subfamily.

It localises to the cytoplasm. The enzyme catalyses CMP + ATP = CDP + ADP. The catalysed reaction is dCMP + ATP = dCDP + ADP. This chain is Cytidylate kinase, found in Thermotoga petrophila (strain ATCC BAA-488 / DSM 13995 / JCM 10881 / RKU-1).